Consider the following 867-residue polypeptide: Bifunctional cis-abienol synthase, chloroplastic (867 aa).

The N-terminal 49 residues, 1–49 (MALPVYSLKSHIPITTIASAKMNYTPNKGMITANGRSRRIRLSPNKIVA), are a transit peptide targeting the chloroplast. Residue lysine 270 participates in substrate binding. The DXDD motif motif lies at 403–406 (DIDD). Substrate is bound at residue lysine 490. Mg(2+)-binding residues include aspartate 622, aspartate 626, asparagine 763, aspartate 764, threonine 767, and glutamate 771. Positions 622–626 (DDLYD) match the DDXXD motif motif.

The protein belongs to the terpene synthase family. Tpsd subfamily. The cofactor is Mg(2+).

The protein resides in the plastid. Its subcellular location is the chloroplast. It catalyses the reaction 8-hydroxycopalyl diphosphate = cis-abienol + diphosphate. The catalysed reaction is (2E,6E,10E)-geranylgeranyl diphosphate + H2O = 8-hydroxycopalyl diphosphate. Its pathway is terpene metabolism; oleoresin biosynthesis. Functionally, involved in the biosynthesis of cis-abienol, a labdane diterpene that can be used as synthesis precursor of ambergris substitution fragance products. Bifunctional class I/II enzyme in which both the bicyclization and water capture occur in the class II active site, resulting in an intermediary labda-13-en-8-ol diphosphate, which undergoes cleavage of the diphosphate group and final deprotonation at the class I active site. No activity with copalyl diphosphate as substrate. The sequence is that of Bifunctional cis-abienol synthase, chloroplastic (CAS) from Abies balsamea (Balsam fir).